We begin with the raw amino-acid sequence, 602 residues long: MKNLSFLINRRKENTSDSNVYPGKAKSHEPSWIEMDDQTKKDGLDIVHVEFSPDTRAPSDSNKVITEIFDATEDAKEADESERGMPLATALNTYPKAAAWSLLVSTTLIMEGYDTAILGAFYALPIFQRKFGSQNDKTGEWEISASWQIGLTLCYMAGEIVGLQLTGPSVDLVGNRYTLIIALFFLAAFTFILYFCNSLGMIAVGQALCGMPWGCFQCLTVSYASEICPLALRYYLTTYSNLCWLFGQLFAAGIMKNSQKKYADSELGYKLPFALQWILPVPLALGIFFAPESPWWLVKKGRFDEARRSLRRTLSGKGPEKEILVTLEVDKIKVTIDKEKRLTSKEGSYSDCFEDKINRRRTRITCLCWAGQATCGSILIGYSTYFYEKAGVSTEMSFTFSIIQYCLGICATFLSWWASKYFGRYDLYAFGLAFQTIVFFIIGGLGCSSTHGSKMGSGSLLMAVAFFYNLGIAPVVFCLVSEMPSSRLRTKTIILARNTYNVVSIICSVLILYQLNSKKWNWGAKSGFFWGVLCFCTLIWAVVDLPETAGKTFVEINELFKLGVSARKFKSTKVDPFVVKNPPKDVSHNDPKGDIEASIAEE.

Residues 1–106 are Cytoplasmic-facing; that stretch reads MKNLSFLINR…AAAWSLLVST (106 aa). Residues 107–127 form a helical membrane-spanning segment; it reads TLIMEGYDTAILGAFYALPIF. Residues 128–142 are Extracellular-facing; that stretch reads QRKFGSQNDKTGEWE. Residues 143–163 form a helical membrane-spanning segment; sequence ISASWQIGLTLCYMAGEIVGL. Over 164–178 the chain is Cytoplasmic; that stretch reads QLTGPSVDLVGNRYT. A helical membrane pass occupies residues 179–199; the sequence is LIIALFFLAAFTFILYFCNSL. Position 200 (Gly-200) is a topological domain, extracellular. A helical transmembrane segment spans residues 201–221; the sequence is MIAVGQALCGMPWGCFQCLTV. Residues 222-234 lie on the Cytoplasmic side of the membrane; it reads SYASEICPLALRY. Residues 235–255 form a helical membrane-spanning segment; it reads YLTTYSNLCWLFGQLFAAGIM. Topologically, residues 256-270 are extracellular; the sequence is KNSQKKYADSELGYK. A helical membrane pass occupies residues 271-291; the sequence is LPFALQWILPVPLALGIFFAP. At 292–363 the chain is on the cytoplasmic side; that stretch reads ESPWWLVKKG…EDKINRRRTR (72 aa). The chain crosses the membrane as a helical span at residues 364–384; that stretch reads ITCLCWAGQATCGSILIGYST. Topologically, residues 385 to 397 are extracellular; the sequence is YFYEKAGVSTEMS. Residues 398-418 form a helical membrane-spanning segment; the sequence is FTFSIIQYCLGICATFLSWWA. Residues 419–426 lie on the Cytoplasmic side of the membrane; the sequence is SKYFGRYD. Residues 427–447 traverse the membrane as a helical segment; the sequence is LYAFGLAFQTIVFFIIGGLGC. The Extracellular portion of the chain corresponds to 448-459; sequence SSTHGSKMGSGS. A helical transmembrane segment spans residues 460 to 480; sequence LLMAVAFFYNLGIAPVVFCLV. At 481-492 the chain is on the cytoplasmic side; it reads SEMPSSRLRTKT. A helical membrane pass occupies residues 493 to 513; sequence IILARNTYNVVSIICSVLILY. Topologically, residues 514–525 are extracellular; sequence QLNSKKWNWGAK. A helical transmembrane segment spans residues 526–546; that stretch reads SGFFWGVLCFCTLIWAVVDLP. The Cytoplasmic portion of the chain corresponds to 547-602; that stretch reads ETAGKTFVEINELFKLGVSARKFKSTKVDPFVVKNPPKDVSHNDPKGDIEASIAEE. The tract at residues 580 to 602 is disordered; it reads KNPPKDVSHNDPKGDIEASIAEE. Over residues 582–595 the composition is skewed to basic and acidic residues; the sequence is PPKDVSHNDPKGDI.

This sequence belongs to the major facilitator superfamily. Sugar transporter (TC 2.A.1.1) family.

It localises to the cell membrane. Functionally, high-affinity uptake of maltose and maltotriose. Also transports alpha-methylglucoside, glucose and turanose but not melezitose or trehalose. The protein is Alpha-glucosides permease MPH3 (MPH3) of Saccharomyces cerevisiae (strain AWRI1631) (Baker's yeast).